The primary structure comprises 99 residues: UPF0473 protein LEUM_0559 (99 aa).

This sequence belongs to the UPF0473 family.

In Leuconostoc mesenteroides subsp. mesenteroides (strain ATCC 8293 / DSM 20343 / BCRC 11652 / CCM 1803 / JCM 6124 / NCDO 523 / NBRC 100496 / NCIMB 8023 / NCTC 12954 / NRRL B-1118 / 37Y), this protein is UPF0473 protein LEUM_0559.